A 293-amino-acid chain; its full sequence is Dehydrodolichyl diphosphate synthase complex subunit NUS1 (293 aa).

The next 3 membrane-spanning stretches (helical) occupy residues 1–23, 35–56, and 117–135; these read MTGLYELVWRVLHALLCLHRTLT, WIWRRCCRAASAAVLAPLGFTL, and IASLVVWCMAVGISYISVY. N-linked (GlcNAc...) asparagine glycans are attached at residues asparagine 144 and asparagine 271. An RXG motif; crucial for prenyltransferase activity motif is present at residues 290–292; that stretch reads RLG. Residues leucine 291 and glycine 292 each contribute to the isopentenyl diphosphate site.

The protein belongs to the UPP synthase family. The active dehydrodolichyl diphosphate synthase complex is a heterotetramer composed of a dimer of heterodimer of DHDDS and NUS1. Interacts with NPC2. Requires Mg(2+) as cofactor.

The protein localises to the endoplasmic reticulum membrane. The enzyme catalyses n isopentenyl diphosphate + (2E,6E)-farnesyl diphosphate = a di-trans,poly-cis-polyprenyl diphosphate + n diphosphate. Its pathway is protein modification; protein glycosylation. The protein operates within lipid metabolism. Its activity is regulated as follows. Activated by phospholipids including cardiolipin, phosphatidylcholine, phosphatidylethanolamine, phosphatidylinositol and phosphatidylserine. Its function is as follows. With DHDDS, forms the dehydrodolichyl diphosphate synthase (DDS) complex, an essential component of the dolichol monophosphate (Dol-P) biosynthetic machinery. Both subunits contribute to enzymatic activity, i.e. condensation of multiple copies of isopentenyl pyrophosphate (IPP) to farnesyl pyrophosphate (FPP) to produce dehydrodolichyl diphosphate (Dedol-PP), a precursor of dolichol phosphate which is utilized as a sugar carrier in protein glycosylation in the endoplasmic reticulum (ER). Synthesizes long-chain polyprenols, mostly of C95 and C100 chain length. Regulates the glycosylation and stability of nascent NPC2, thereby promoting trafficking of LDL-derived cholesterol. Acts as a specific receptor for the N-terminus of Nogo-B, a neural and cardiovascular regulator. In Homo sapiens (Human), this protein is Dehydrodolichyl diphosphate synthase complex subunit NUS1.